The following is a 78-amino-acid chain: Small ribosomal subunit protein bS16c (78 aa).

This sequence belongs to the bacterial ribosomal protein bS16 family.

It localises to the plastid. The protein resides in the chloroplast. The protein is Small ribosomal subunit protein bS16c of Daucus carota (Wild carrot).